A 445-amino-acid chain; its full sequence is Succinate--CoA ligase [ADP-forming] subunit beta, mitochondrial (445 aa).

A mitochondrion-targeting transit peptide spans 1 to 17; the sequence is MLSNIVKKTIQSSKNLK. The ATP-grasp domain occupies 43–270; the sequence is QKMMKSYGIN…DNAAFRHPDI (228 aa). ATP contacts are provided by residues K80 and 87 to 89; that span reads GRG. Mg(2+)-binding residues include N240 and D254. Residues N305 and 362–364 each bind substrate; that span reads GIM.

It belongs to the succinate/malate CoA ligase beta subunit family. ATP-specific subunit beta subfamily. Heterodimer of an alpha and a beta subunit. The beta subunit determines specificity for ATP. The cofactor is Mg(2+).

The protein resides in the mitochondrion. It catalyses the reaction succinate + ATP + CoA = succinyl-CoA + ADP + phosphate. Its pathway is carbohydrate metabolism; tricarboxylic acid cycle; succinate from succinyl-CoA (ligase route): step 1/1. Its function is as follows. ATP-specific succinyl-CoA synthetase functions in the citric acid cycle (TCA), coupling the hydrolysis of succinyl-CoA to the synthesis of ATP and thus represents the only step of substrate-level phosphorylation in the TCA. The beta subunit provides nucleotide specificity of the enzyme and binds the substrate succinate, while the binding sites for coenzyme A and phosphate are found in the alpha subunit. The protein is Succinate--CoA ligase [ADP-forming] subunit beta, mitochondrial (scsC) of Dictyostelium discoideum (Social amoeba).